We begin with the raw amino-acid sequence, 85 residues long: Selenoprotein W (85 aa).

Residues 10 to 13 (CGAU) constitute a cross-link (cysteinyl-selenocysteine (Cys-Sec); redox-active). A non-standard amino acid (selenocysteine) is located at residue Sec-13.

Belongs to the SelWTH family. Selenoprotein W subfamily. As to expression, expressed ubiquitously with predominant expression in the pituitary, spinal cord, sciatic nerve, cerebral cortex, cerebral nuclei, thalamus, cerebellum, muscle, cartilage, trachea, gizzard and artery. Weakly expressed in pancreas, testis, ovary, kidney and veins.

It localises to the cytoplasm. Its function is as follows. Plays a role as a glutathione (GSH)-dependent antioxidant. May be involved in a redox-related process. May play a role in the myopathies of selenium deficiency. The protein is Selenoprotein W of Gallus gallus (Chicken).